Consider the following 341-residue polypeptide: L-threonine 3-dehydrogenase (341 aa).

C38 contributes to the Zn(2+) binding site. Residues T40 and H43 each act as charge relay system in the active site. The Zn(2+) site is built by H63, E64, C93, C96, C99, and C107. NAD(+) is bound by residues I175, D195, R200, 262–264 (LGI), and 286–287 (IY).

Belongs to the zinc-containing alcohol dehydrogenase family. As to quaternary structure, homotetramer. Zn(2+) serves as cofactor.

It is found in the cytoplasm. It catalyses the reaction L-threonine + NAD(+) = (2S)-2-amino-3-oxobutanoate + NADH + H(+). Its pathway is amino-acid degradation; L-threonine degradation via oxydo-reductase pathway; glycine from L-threonine: step 1/2. Functionally, catalyzes the NAD(+)-dependent oxidation of L-threonine to 2-amino-3-ketobutyrate. This is L-threonine 3-dehydrogenase from Shewanella woodyi (strain ATCC 51908 / MS32).